A 368-amino-acid chain; its full sequence is Histidinol-phosphate aminotransferase (368 aa).

K215 is subject to N6-(pyridoxal phosphate)lysine.

Belongs to the class-II pyridoxal-phosphate-dependent aminotransferase family. Histidinol-phosphate aminotransferase subfamily. Homodimer. It depends on pyridoxal 5'-phosphate as a cofactor.

It carries out the reaction L-histidinol phosphate + 2-oxoglutarate = 3-(imidazol-4-yl)-2-oxopropyl phosphate + L-glutamate. It functions in the pathway amino-acid biosynthesis; L-histidine biosynthesis; L-histidine from 5-phospho-alpha-D-ribose 1-diphosphate: step 7/9. The polypeptide is Histidinol-phosphate aminotransferase (Buchnera aphidicola subsp. Acyrthosiphon pisum (strain 5A)).